A 192-amino-acid chain; its full sequence is Ion-translocating oxidoreductase complex subunit A (192 aa).

Helical transmembrane passes span 5-25, 39-59, 65-85, 102-122, 134-154, and 171-191; these read LLLL…FLGL, IGMS…SYLV, LPFD…AVVV, ALGI…VALL, AIYG…FSAM, and AIAM…TGLV.

The protein belongs to the NqrDE/RnfAE family. As to quaternary structure, the complex is composed of six subunits: RnfA, RnfB, RnfC, RnfD, RnfE and RnfG.

Its subcellular location is the cell inner membrane. In terms of biological role, part of a membrane-bound complex that couples electron transfer with translocation of ions across the membrane. This Shewanella sp. (strain ANA-3) protein is Ion-translocating oxidoreductase complex subunit A.